A 189-amino-acid polypeptide reads, in one-letter code: Protein C1orf43 homolog (189 aa).

Residues 11-31 (VNVVLVMAYGSLVFVLLFIFV) traverse the membrane as a helical segment.

It localises to the membrane. The protein resides in the golgi apparatus. It is found in the mitochondrion. Functionally, general regulator of phagocytosis. Required to uptake Gram negative bacterium by macrophages. The polypeptide is Protein C1orf43 homolog (Pongo abelii (Sumatran orangutan)).